Consider the following 666-residue polypeptide: DNA mismatch repair protein MutL (666 aa).

Belongs to the DNA mismatch repair MutL/HexB family.

In terms of biological role, this protein is involved in the repair of mismatches in DNA. It is required for dam-dependent methyl-directed DNA mismatch repair. May act as a 'molecular matchmaker', a protein that promotes the formation of a stable complex between two or more DNA-binding proteins in an ATP-dependent manner without itself being part of a final effector complex. The sequence is that of DNA mismatch repair protein MutL from Clostridium botulinum (strain Langeland / NCTC 10281 / Type F).